A 448-amino-acid polypeptide reads, in one-letter code: Probable ribonuclease FAU-1 (448 aa).

This sequence belongs to the FAU-1 family.

Functionally, probable RNase involved in rRNA stability through maturation and/or degradation of precursor rRNAs. Binds to RNA in loop regions with AU-rich sequences. This chain is Probable ribonuclease FAU-1, found in Pyrobaculum calidifontis (strain DSM 21063 / JCM 11548 / VA1).